The following is a 397-amino-acid chain: MSIFKMMLIYFAILWVVNAAQLLDIDPQGVIPGAYIVVMKDRVSSLEFSSHVRWLKRTHRRNLAKRAIPFTEGLSATWDIAGWQAYSGSFDEDTVQEILNHENVEFVEPNKEMQVASTIKQGNVTWGLSRISHKENSSHDYVSTYGEGENITFYGIDSGIDINQADFTGRARWGINLADHVDTDCNGHGTHTAGTVAGQKFGILKKASIVSIKILDCYGYGDITRYINGLNWAINDAKERGLLGKSVMNISLKTGRSRAVNEATVRAQEAGIFIAVAAGNQATSAEFYSPGSAPEVCTVGASTRNDTKAIFSNYGELVDLFAPREYIRSTLPHNLTGLMSGTSMATPHVCGVGGLIMATEGLAPEKVCDRLKELANPTIQNPGFNTTNKLLYNGSGA.

The N-terminal stretch at 1-19 (MSIFKMMLIYFAILWVVNA) is a signal peptide. The propeptide occupies 20 to 116 (AQLLDIDPQG…VEPNKEMQVA (97 aa)). An Inhibitor I9 domain is found at 35–115 (YIVVMKDRVS…FVEPNKEMQV (81 aa)). N-linked (GlcNAc...) asparagine glycosylation is found at N123, N136, and N150. The 273-residue stretch at 125-397 (TWGLSRISHK…NKLLYNGSGA (273 aa)) folds into the Peptidase S8 domain. Active-site charge relay system residues include D157 and H188. N249, N305, and N334 each carry an N-linked (GlcNAc...) asparagine glycan. Catalysis depends on S343, which acts as the Charge relay system. N385 and N393 each carry an N-linked (GlcNAc...) asparagine glycan.

This sequence belongs to the peptidase S8 family.

It is found in the secreted. Its function is as follows. Secreted subtilisin-like serine protease with keratinolytic activity that contributes to pathogenicity. In Trichophyton verrucosum (strain HKI 0517), this protein is Subtilisin-like protease 12 (SUB12).